The sequence spans 270 residues: MYGTRSSAYWSTQPGKFDVLNLRMTFPSSSAYEIPDLRPTTYVPANLAAWNMPRHREYAAVSGGALHFFLDDYRFETVWSSPERLLPRVQAVGAALTPDFSLWRDMPRAAAVWNVYRSRWCGAYWQSQGIEVLPTACWATPDTFDFCFDGIPEGATVAISSMGIRSSKVDQALFRAGLQELLDRKQPRLLLAYGRLRYCDDMNLPEVKEYPTYWDRRRKQVSDAWAEEDPPVAAVPLEPEDATAPGKEPGQAAWVDLEAAVEPPEAAGAV.

The tract at residues 225–249 (WAEEDPPVAAVPLEPEDATAPGKEP) is disordered.

This is Gene 1 protein (1) from Mycobacterium (Mycobacteriophage D29).